We begin with the raw amino-acid sequence, 430 residues long: Enolase (430 aa).

Gln-163 is a (2R)-2-phosphoglycerate binding site. The active-site Proton donor is Glu-205. Positions 242, 287, and 314 each coordinate Mg(2+). Positions 339, 368, 369, and 390 each coordinate (2R)-2-phosphoglycerate. The Proton acceptor role is filled by Lys-339.

It belongs to the enolase family. Mg(2+) is required as a cofactor.

The protein localises to the cytoplasm. The protein resides in the secreted. Its subcellular location is the cell surface. The enzyme catalyses (2R)-2-phosphoglycerate = phosphoenolpyruvate + H2O. It functions in the pathway carbohydrate degradation; glycolysis; pyruvate from D-glyceraldehyde 3-phosphate: step 4/5. Catalyzes the reversible conversion of 2-phosphoglycerate (2-PG) into phosphoenolpyruvate (PEP). It is essential for the degradation of carbohydrates via glycolysis. The chain is Enolase from Bacillus velezensis (strain DSM 23117 / BGSC 10A6 / LMG 26770 / FZB42) (Bacillus amyloliquefaciens subsp. plantarum).